A 172-amino-acid polypeptide reads, in one-letter code: Shikimate kinase (172 aa).

14–19 (GAGKST) is a binding site for ATP. Ser18 provides a ligand contact to Mg(2+). Asp36, Arg60, and Gly82 together coordinate substrate. Position 120 (Arg120) interacts with ATP. A substrate-binding site is contributed by Arg139. Gln156 serves as a coordination point for ATP.

Belongs to the shikimate kinase family. In terms of assembly, monomer. Mg(2+) serves as cofactor.

Its subcellular location is the cytoplasm. It catalyses the reaction shikimate + ATP = 3-phosphoshikimate + ADP + H(+). It functions in the pathway metabolic intermediate biosynthesis; chorismate biosynthesis; chorismate from D-erythrose 4-phosphate and phosphoenolpyruvate: step 5/7. Functionally, catalyzes the specific phosphorylation of the 3-hydroxyl group of shikimic acid using ATP as a cosubstrate. In Vibrio parahaemolyticus serotype O3:K6 (strain RIMD 2210633), this protein is Shikimate kinase.